We begin with the raw amino-acid sequence, 310 residues long: Vomeronasal type-1 receptor 97 (310 aa).

The Extracellular segment spans residues 1 to 19 (MNKDNILHTDTNIKITLFS). The helical transmembrane segment at 20-40 (EVSIGISANSALFFSHLFMLF) threads the bilayer. Over 41–49 (EKNRSKPID) the chain is Cytoplasmic. Residues 50-70 (LYIAFLSLTQLMLLITIGLIA) traverse the membrane as a helical segment. The Extracellular portion of the chain corresponds to 71 to 93 (ADMFMSRGRWDSTTCQSLIYLHR). A disulfide bond links C85 and C172. Residues 94–114 (LLRGFTLCATCLLNVLWTITL) form a helical membrane-spanning segment. The Cytoplasmic segment spans residues 115 to 131 (SPRSSCLTTFKHKSPHH). A helical transmembrane segment spans residues 132 to 152 (ISGAFLFFCVLYISFGSHLFL). At 153 to 190 (STIATPNLTSDNFMYVTQSCSFLPMSYSRTSMFSTPMA) the chain is on the extracellular side. A glycan (N-linked (GlcNAc...) asparagine) is linked at N159. The helical transmembrane segment at 191 to 211 (IREALLIGLIGLSSGYMVAFL) threads the bilayer. Topologically, residues 212 to 238 (WRHKNQARHLHSTSLSSKVSPEQRATR) are cytoplasmic. Residues 239–259 (TIMILMSFFVVLYILENVVFY) traverse the membrane as a helical segment. Residues 260–269 (SRMTFKDGSM) lie on the Extracellular side of the membrane. A helical membrane pass occupies residues 270-290 (FYCVQIIVSHSYATISPFVFI). Over 291–310 (CTEKRIIKLWGSMSSRIVSI) the chain is Cytoplasmic.

This sequence belongs to the G-protein coupled receptor 1 family. In terms of tissue distribution, expressed in 1-4% of neurons of the vomeronasal organ. Only one pheromone receptor gene may be expressed in a particular neuron. Not expressed in the main olfactory epithelium.

The protein resides in the cell membrane. Putative pheromone receptor implicated in the regulation of social as well as reproductive behavior. This is Vomeronasal type-1 receptor 97 (Vom1r97) from Rattus norvegicus (Rat).